A 144-amino-acid polypeptide reads, in one-letter code: Large ribosomal subunit protein uL15 (144 aa).

Residues 1–54 (MKLNTIKPAEGAKHARRRVGRGIGSGLGKTGGRGHKGQKSRAGGFHKVGFEGGQ) form a disordered region. The segment covering 21–31 (RGIGSGLGKTG) has biased composition (gly residues).

It belongs to the universal ribosomal protein uL15 family. As to quaternary structure, part of the 50S ribosomal subunit.

Its function is as follows. Binds to the 23S rRNA. In Methylobacillus flagellatus (strain ATCC 51484 / DSM 6875 / VKM B-1610 / KT), this protein is Large ribosomal subunit protein uL15.